A 244-amino-acid polypeptide reads, in one-letter code: tRNA (guanine-N(7)-)-methyltransferase (244 aa).

Positions 1 to 10 (MSDTPQSPAQ) are enriched in polar residues. The segment at 1–20 (MSDTPQSPAQGSLAEHDEAR) is disordered. Residues Glu-74, Glu-99, Asp-126, and Asp-149 each coordinate S-adenosyl-L-methionine. Asp-149 is an active-site residue. Residues Lys-153, Asp-185, and 222 to 225 (TKFE) contribute to the substrate site.

It belongs to the class I-like SAM-binding methyltransferase superfamily. TrmB family.

The catalysed reaction is guanosine(46) in tRNA + S-adenosyl-L-methionine = N(7)-methylguanosine(46) in tRNA + S-adenosyl-L-homocysteine. It participates in tRNA modification; N(7)-methylguanine-tRNA biosynthesis. Catalyzes the formation of N(7)-methylguanine at position 46 (m7G46) in tRNA. The chain is tRNA (guanine-N(7)-)-methyltransferase from Pseudomonas aeruginosa (strain UCBPP-PA14).